The sequence spans 101 residues: Putative pterin-4-alpha-carbinolamine dehydratase (101 aa).

This sequence belongs to the pterin-4-alpha-carbinolamine dehydratase family.

It carries out the reaction (4aS,6R)-4a-hydroxy-L-erythro-5,6,7,8-tetrahydrobiopterin = (6R)-L-erythro-6,7-dihydrobiopterin + H2O. The sequence is that of Putative pterin-4-alpha-carbinolamine dehydratase from Nitrobacter hamburgensis (strain DSM 10229 / NCIMB 13809 / X14).